The primary structure comprises 37 residues: Large ribosomal subunit protein bL36c (37 aa).

This sequence belongs to the bacterial ribosomal protein bL36 family.

The protein localises to the plastid. The protein resides in the cyanelle. The sequence is that of Large ribosomal subunit protein bL36c (rpl36) from Cyanophora paradoxa.